The following is a 374-amino-acid chain: Golgi-associated kinase 1B (374 aa).

The Cytoplasmic segment spans residues 1–38 (MSPDRTGRGSSSSSSSLKRLVCKSFVRAWGRRRPNLRR). Residues 39–61 (AVLLICTASAIYGIVIASQVLRG) form a helical; Signal-anchor for type II membrane protein membrane-spanning segment. The Extracellular segment spans residues 62–374 (STHPGKALRK…LLQVYTRLDR (313 aa)). The segment covering 136 to 146 (VRPKKRRKYGA) has biased composition (basic residues). Residues 136 to 177 (VRPKKRRKYGARRPGVVQDTESKKDTLWSKVPNSQHKSQAQS) form a disordered region. A compositionally biased stretch (polar residues) spans 166–177 (VPNSQHKSQAQS). Asn-281 and Asn-314 each carry an N-linked (GlcNAc...) asparagine glycan.

It belongs to the GASK family.

Its subcellular location is the golgi apparatus membrane. This Xenopus laevis (African clawed frog) protein is Golgi-associated kinase 1B.